Reading from the N-terminus, the 445-residue chain is Glutamate--tRNA ligase 1 (445 aa).

The short motif at 10-20 (PSPTGMLHVGN) is the 'HIGH' region element. A 'KMSKS' region motif is present at residues 240 to 244 (KISKR). Position 243 (Lys243) interacts with ATP.

This sequence belongs to the class-I aminoacyl-tRNA synthetase family. Glutamate--tRNA ligase type 1 subfamily. As to quaternary structure, monomer.

The protein localises to the cytoplasm. It carries out the reaction tRNA(Glu) + L-glutamate + ATP = L-glutamyl-tRNA(Glu) + AMP + diphosphate. Catalyzes the attachment of glutamate to tRNA(Glu) in a two-step reaction: glutamate is first activated by ATP to form Glu-AMP and then transferred to the acceptor end of tRNA(Glu). This chain is Glutamate--tRNA ligase 1, found in Rickettsia bellii (strain OSU 85-389).